Here is a 231-residue protein sequence, read N- to C-terminus: Ribose-5-phosphate isomerase A (231 aa).

Substrate is bound by residues 28–31 (TGST), 83–86 (DGAD), and 96–99 (KGGG). E105 serves as the catalytic Proton acceptor. K123 lines the substrate pocket.

Belongs to the ribose 5-phosphate isomerase family. As to quaternary structure, homodimer.

The enzyme catalyses aldehydo-D-ribose 5-phosphate = D-ribulose 5-phosphate. It functions in the pathway carbohydrate degradation; pentose phosphate pathway; D-ribose 5-phosphate from D-ribulose 5-phosphate (non-oxidative stage): step 1/1. Functionally, catalyzes the reversible conversion of ribose-5-phosphate to ribulose 5-phosphate. The protein is Ribose-5-phosphate isomerase A of Sinorhizobium medicae (strain WSM419) (Ensifer medicae).